The primary structure comprises 354 residues: Ribosomal RNA large subunit methyltransferase M (354 aa).

S-adenosyl-L-methionine contacts are provided by residues Ser183, 216–219, Asp235, Asp255, and Asp271; that span reads SPGG. The active-site Proton acceptor is the Lys300.

Belongs to the class I-like SAM-binding methyltransferase superfamily. RNA methyltransferase RlmE family. RlmM subfamily. Monomer.

The protein resides in the cytoplasm. It carries out the reaction cytidine(2498) in 23S rRNA + S-adenosyl-L-methionine = 2'-O-methylcytidine(2498) in 23S rRNA + S-adenosyl-L-homocysteine + H(+). In terms of biological role, catalyzes the 2'-O-methylation at nucleotide C2498 in 23S rRNA. This is Ribosomal RNA large subunit methyltransferase M from Pseudomonas entomophila (strain L48).